The chain runs to 144 residues: MKETKEELRQRIGEEAYQVTQNAATERAFTGKYDEFFEDGIYVDVVSGEPLFSSKDKYNSGCGWPAFTQPINNRMVTNHEDNSFGMHRVEVRSRQAQSHLGHVFNDGPQDRGGLRYCINSAALQFIPVAELDEKGYGEYKKLFD.

A MsrB domain is found at 5–128; sequence KEELRQRIGE…NSAALQFIPV (124 aa). The active-site Nucleophile is the Cys117.

The protein belongs to the MsrB Met sulfoxide reductase family.

It carries out the reaction L-methionyl-[protein] + [thioredoxin]-disulfide + H2O = L-methionyl-(R)-S-oxide-[protein] + [thioredoxin]-dithiol. This Ligilactobacillus salivarius (strain UCC118) (Lactobacillus salivarius) protein is Peptide methionine sulfoxide reductase MsrB.